A 105-amino-acid polypeptide reads, in one-letter code: Nitrogenase-stabilizing/protective protein NifW (105 aa).

The protein belongs to the NifW family. Homotrimer; associates with NifD.

Functionally, may protect the nitrogenase Fe-Mo protein from oxidative damage. This is Nitrogenase-stabilizing/protective protein NifW from Rhodospirillum centenum (strain ATCC 51521 / SW).